Consider the following 535-residue polypeptide: Glucose-6-phosphate isomerase (535 aa).

E347 functions as the Proton donor in the catalytic mechanism. Catalysis depends on residues H378 and K493.

This sequence belongs to the GPI family.

The protein resides in the cytoplasm. It catalyses the reaction alpha-D-glucose 6-phosphate = beta-D-fructose 6-phosphate. The protein operates within carbohydrate biosynthesis; gluconeogenesis. It functions in the pathway carbohydrate degradation; glycolysis; D-glyceraldehyde 3-phosphate and glycerone phosphate from D-glucose: step 2/4. Functionally, catalyzes the reversible isomerization of glucose-6-phosphate to fructose-6-phosphate. This is Glucose-6-phosphate isomerase from Chlamydia felis (strain Fe/C-56) (Chlamydophila felis).